The following is a 379-amino-acid chain: Cytochrome b (379 aa).

A run of 4 helical transmembrane segments spans residues 33 to 53 (FGSLLGMCLMIQILTGLFLAM), 77 to 98 (WLIRYLHANGASMFFICLFIHV), 113 to 133 (WNIGIILFLTTMATAFVGYVL), and 178 to 198 (FFAFHFILPFIITAFALVHLL). Positions 83 and 97 each coordinate heme b. Heme b-binding residues include His-182 and His-196. Residue His-201 coordinates a ubiquinone. A run of 4 helical transmembrane segments spans residues 226–246 (TKDLLGIFLLLLVLMILALFF), 288–308 (LGGVLALVLSILILAAFPLLN), 320–340 (ITQVIYWIFIANLLVLTWIGG), and 347–367 (FTMIGQIASITYFAIIIILIP).

The protein belongs to the cytochrome b family. The cytochrome bc1 complex contains 11 subunits: 3 respiratory subunits (MT-CYB, CYC1 and UQCRFS1), 2 core proteins (UQCRC1 and UQCRC2) and 6 low-molecular weight proteins (UQCRH/QCR6, UQCRB/QCR7, UQCRQ/QCR8, UQCR10/QCR9, UQCR11/QCR10 and a cleavage product of UQCRFS1). This cytochrome bc1 complex then forms a dimer. Requires heme b as cofactor.

The protein localises to the mitochondrion inner membrane. Functionally, component of the ubiquinol-cytochrome c reductase complex (complex III or cytochrome b-c1 complex) that is part of the mitochondrial respiratory chain. The b-c1 complex mediates electron transfer from ubiquinol to cytochrome c. Contributes to the generation of a proton gradient across the mitochondrial membrane that is then used for ATP synthesis. The chain is Cytochrome b (MT-CYB) from Akodon spegazzinii (Spegazzini's grass mouse).